The following is a 272-amino-acid chain: Small ribosomal subunit protein uS3 (272 aa).

Residues 43-111 enclose the KH type-2 domain; sequence IRELMTTGME…QIQLNILEVK (69 aa). The disordered stretch occupies residues 218–272; the sequence is AKEAAQPSGRGRGGERRGGGERRRRNDRAERAPRQENAGAGAETPAAAPAEGGNA. Residues 229 to 238 show a composition bias toward basic and acidic residues; it reads RGGERRGGGE. Over residues 253–272 the composition is skewed to low complexity; it reads ENAGAGAETPAAAPAEGGNA.

It belongs to the universal ribosomal protein uS3 family. Part of the 30S ribosomal subunit. Forms a tight complex with proteins S10 and S14.

Its function is as follows. Binds the lower part of the 30S subunit head. Binds mRNA in the 70S ribosome, positioning it for translation. The polypeptide is Small ribosomal subunit protein uS3 (Micrococcus luteus (strain ATCC 4698 / DSM 20030 / JCM 1464 / CCM 169 / CCUG 5858 / IAM 1056 / NBRC 3333 / NCIMB 9278 / NCTC 2665 / VKM Ac-2230) (Micrococcus lysodeikticus)).